A 560-amino-acid polypeptide reads, in one-letter code: Arginine--tRNA ligase (560 aa).

Positions 122 to 132 match the 'HIGH' region motif; that stretch reads ANPNGPLHIGH.

It belongs to the class-I aminoacyl-tRNA synthetase family.

It is found in the cytoplasm. It carries out the reaction tRNA(Arg) + L-arginine + ATP = L-arginyl-tRNA(Arg) + AMP + diphosphate. This Methanothermobacter thermautotrophicus (strain ATCC 29096 / DSM 1053 / JCM 10044 / NBRC 100330 / Delta H) (Methanobacterium thermoautotrophicum) protein is Arginine--tRNA ligase (argS).